An 865-amino-acid polypeptide reads, in one-letter code: Armadillo repeat-containing protein 2 (865 aa).

Disordered stretches follow at residues 39 to 75 (TVRT…FSVH) and 214 to 243 (SVPF…DQSR). Polar residues predominate over residues 60–75 (SSRTPENRPPSSFSVH). ARM repeat units follow at residues 261 to 300 (IEVD…HALE), 303 to 343 (NMLG…ALKV), 362 to 402 (EKND…TIKF), 407 to 448 (PEFL…HLLV), 461 to 502 (PLAR…KLTS), 505 to 546 (DCCV…NLTA), 550 to 587 (QARE…GEGD), 589 to 614 (RPEA…NLAI), 617 to 660 (GVGP…NLSY), 662 to 703 (KVKN…NLSQ), 705 to 744 (HDIC…NLTV), and 746 to 788 (RDKR…NFSE).

In terms of biological role, required for sperm flagellum axoneme organization and function. Involved in axonemal central pair complex assembly and/or stability. The sequence is that of Armadillo repeat-containing protein 2 from Bos taurus (Bovine).